The following is a 91-amino-acid chain: Lipolysis-activating peptide 1-alpha chain (91 aa).

Residues 1-21 (MNIKLFCFLSILISLTGLSLS) form the signal peptide. An LCN-type CS-alpha/beta domain is found at 23 to 87 (DDGNYPIDAN…FFDAYKTYCK (65 aa)). Disulfide bonds link C38-C61, C47-C66, and C51-C68.

It belongs to the long (3 C-C) scorpion toxin superfamily. Heterodimer of this alpha chain and a beta chain (AC D9U2A2). In terms of tissue distribution, expressed by the venom gland.

The protein resides in the secreted. Functionally, the heterodimer LVP1 induces lipolysis in rat adipocytes. Induction of lipolysis by LVP1 appears to be mediated through the beta-2 adrenergic receptor pathway (ADRB2). This chain is Lipolysis-activating peptide 1-alpha chain, found in Lychas mucronatus (Chinese swimming scorpion).